Here is a 253-residue protein sequence, read N- to C-terminus: Indole-3-glycerol phosphate synthase (253 aa).

Belongs to the TrpC family.

The catalysed reaction is 1-(2-carboxyphenylamino)-1-deoxy-D-ribulose 5-phosphate + H(+) = (1S,2R)-1-C-(indol-3-yl)glycerol 3-phosphate + CO2 + H2O. It participates in amino-acid biosynthesis; L-tryptophan biosynthesis; L-tryptophan from chorismate: step 4/5. The protein is Indole-3-glycerol phosphate synthase of Bacillus cereus (strain G9842).